We begin with the raw amino-acid sequence, 430 residues long: Histidine--tRNA ligase (430 aa).

This sequence belongs to the class-II aminoacyl-tRNA synthetase family. Homodimer.

It is found in the cytoplasm. The catalysed reaction is tRNA(His) + L-histidine + ATP = L-histidyl-tRNA(His) + AMP + diphosphate + H(+). The protein is Histidine--tRNA ligase of Chlamydia caviae (strain ATCC VR-813 / DSM 19441 / 03DC25 / GPIC) (Chlamydophila caviae).